The following is a 789-amino-acid chain: Phenylalanine--tRNA ligase beta subunit (789 aa).

The tRNA-binding domain occupies 38–151 (KKHLQSFVVV…NTYNVGESFF (114 aa)). The 77-residue stretch at 398–474 (HNDILLNFSP…RLYGYDKILE (77 aa)) folds into the B5 domain. Mg(2+)-binding residues include aspartate 452, aspartate 458, glutamate 461, and glutamate 462. The region spanning 694 to 787 (LRYQSVKRDF…ISKGFNGILR (94 aa)) is the FDX-ACB domain.

This sequence belongs to the phenylalanyl-tRNA synthetase beta subunit family. Type 1 subfamily. As to quaternary structure, tetramer of two alpha and two beta subunits. Mg(2+) serves as cofactor.

The protein resides in the cytoplasm. It catalyses the reaction tRNA(Phe) + L-phenylalanine + ATP = L-phenylalanyl-tRNA(Phe) + AMP + diphosphate + H(+). In Ehrlichia ruminantium (strain Welgevonden), this protein is Phenylalanine--tRNA ligase beta subunit.